Reading from the N-terminus, the 77-residue chain is Large ribosomal subunit protein uL29 (77 aa).

This sequence belongs to the universal ribosomal protein uL29 family.

This is Large ribosomal subunit protein uL29 from Mycobacterium avium (strain 104).